The sequence spans 275 residues: Fructose-2,6-bisphosphatase TIGAR (275 aa).

The active-site Tele-phosphohistidine intermediate is His11. Glu89 functions as the Proton donor/acceptor in the catalytic mechanism.

The protein belongs to the phosphoglycerate mutase family.

Its subcellular location is the cytoplasm. The protein resides in the nucleus. It localises to the mitochondrion. It catalyses the reaction beta-D-fructose 2,6-bisphosphate + H2O = beta-D-fructose 6-phosphate + phosphate. In terms of biological role, fructose-bisphosphatase hydrolyzing fructose-2,6-bisphosphate as well as fructose-1,6-bisphosphate. Acts as a negative regulator of glycolysis by lowering intracellular levels of fructose-2,6-bisphosphate in a p53/TP53-dependent manner, resulting in the pentose phosphate pathway (PPP) activation and NADPH production. Contributes to the generation of reduced glutathione to cause a decrease in intracellular reactive oxygen species (ROS) content, correlating with its ability to protect cells from oxidative or metabolic stress-induced cell death. May play a role in mitophagy inhibition. The sequence is that of Fructose-2,6-bisphosphatase TIGAR from Xenopus tropicalis (Western clawed frog).